A 401-amino-acid polypeptide reads, in one-letter code: Nicotinate phosphoribosyltransferase (401 aa).

His-221 carries the phosphohistidine; by autocatalysis modification.

The protein belongs to the NAPRTase family. Post-translationally, transiently phosphorylated on a His residue during the reaction cycle. Phosphorylation strongly increases the affinity for substrates and increases the rate of nicotinate D-ribonucleotide production. Dephosphorylation regenerates the low-affinity form of the enzyme, leading to product release.

The catalysed reaction is nicotinate + 5-phospho-alpha-D-ribose 1-diphosphate + ATP + H2O = nicotinate beta-D-ribonucleotide + ADP + phosphate + diphosphate. It functions in the pathway cofactor biosynthesis; NAD(+) biosynthesis; nicotinate D-ribonucleotide from nicotinate: step 1/1. In terms of biological role, catalyzes the synthesis of beta-nicotinate D-ribonucleotide from nicotinate and 5-phospho-D-ribose 1-phosphate at the expense of ATP. This is Nicotinate phosphoribosyltransferase from Serratia proteamaculans (strain 568).